The following is a 78-amino-acid chain: Conotoxin Cl14.9 (78 aa).

Positions M1–S22 are cleaved as a signal peptide. Residues A23–R47 constitute a propeptide that is removed on maturation. Isoleucine amide is present on I70. Positions D74 to Q78 are excised as a propeptide.

Post-translationally, contains 2 disulfide bonds. In terms of tissue distribution, expressed by the venom duct.

Its subcellular location is the secreted. The chain is Conotoxin Cl14.9 from Californiconus californicus (California cone).